The following is a 97-amino-acid chain: Large ribosomal subunit protein uL30m (97 aa).

It belongs to the universal ribosomal protein uL30 family. As to quaternary structure, component of the mitochondrial large ribosomal subunit (mt-LSU). Mature yeast 74S mitochondrial ribosomes consist of a small (37S) and a large (54S) subunit. The 37S small subunit contains a 15S ribosomal RNA (15S mt-rRNA) and at least 32 different proteins. The 54S large subunit contains a 21S rRNA (21S mt-rRNA) and at least 45 different proteins.

It is found in the mitochondrion. Its function is as follows. Component of the mitochondrial ribosome (mitoribosome), a dedicated translation machinery responsible for the synthesis of mitochondrial genome-encoded proteins, including at least some of the essential transmembrane subunits of the mitochondrial respiratory chain. The mitoribosomes are attached to the mitochondrial inner membrane and translation products are cotranslationally integrated into the membrane. The sequence is that of Large ribosomal subunit protein uL30m (mrpl33) from Schizosaccharomyces pombe (strain 972 / ATCC 24843) (Fission yeast).